Consider the following 954-residue polypeptide: Glycine dehydrogenase (decarboxylating) (954 aa).

K704 carries the N6-(pyridoxal phosphate)lysine modification.

The protein belongs to the GcvP family. As to quaternary structure, the glycine cleavage system is composed of four proteins: P, T, L and H. Pyridoxal 5'-phosphate serves as cofactor.

The enzyme catalyses N(6)-[(R)-lipoyl]-L-lysyl-[glycine-cleavage complex H protein] + glycine + H(+) = N(6)-[(R)-S(8)-aminomethyldihydrolipoyl]-L-lysyl-[glycine-cleavage complex H protein] + CO2. Functionally, the glycine cleavage system catalyzes the degradation of glycine. The P protein binds the alpha-amino group of glycine through its pyridoxal phosphate cofactor; CO(2) is released and the remaining methylamine moiety is then transferred to the lipoamide cofactor of the H protein. The protein is Glycine dehydrogenase (decarboxylating) of Rhizobium meliloti (strain 1021) (Ensifer meliloti).